Here is a 180-residue protein sequence, read N- to C-terminus: Interleukin-1-binding protein (180 aa).

The N-terminal stretch at 1-20 (MSILPVIFLPIFFYSPFVQT) is a signal peptide. 3 N-linked (GlcNAc...) asparagine; by host glycosylation sites follow: Asn-80, Asn-103, and Asn-113.

Belongs to the interleukin-1 receptor family. As to quaternary structure, interacts with mouse Il1b.

The protein localises to the secreted. In terms of biological role, may reduce the host inflammatory response by interacting with inteleukin-1 beta (Il1b) and thus decreasing the association between IL1B and its cellular receptor. The chain is Interleukin-1-binding protein (OPG201) from Monkeypox virus.